Here is a 319-residue protein sequence, read N- to C-terminus: Transmembrane and ubiquitin-like domain-containing protein 2 (319 aa).

The helical transmembrane segment at 36 to 56 threads the bilayer; it reads VMVVAGVVALTLALVLAWLST. Disordered stretches follow at residues 88–128 and 145–165; these read VNQG…ARGE and RQAGLGSSRPEAPLGLDDGSC. Residues 95–111 show a composition bias toward basic and acidic residues; the sequence is PTEHPHPSGGNDDKAEE. Residues 173–246 form the Ubiquitin-like domain; sequence INVRLKFLND…IHCHRSPPGA (74 aa). The next 2 membrane-spanning stretches (helical) occupy residues 264 to 284 and 298 to 318; these read LGVNVGSLMVPVFVVLLGVVW and ATISLVGVTVFFSILVFGMYG.

Its subcellular location is the membrane. The protein is Transmembrane and ubiquitin-like domain-containing protein 2 (Tmub2) of Mus musculus (Mouse).